The primary structure comprises 438 residues: Ribosomal protein uS12 methylthiotransferase RimO (438 aa).

The MTTase N-terminal domain maps to 1–115 (MKYFILSLGC…LDKLLADLGE (115 aa)). [4Fe-4S] cluster contacts are provided by cysteine 10, cysteine 46, cysteine 78, cysteine 150, cysteine 154, and cysteine 157. One can recognise a Radical SAM core domain in the interval 136–366 (KSNEVYRYIK…MEVQQEISLN (231 aa)). The TRAM domain occupies 369–437 (KALVGKKIPV…IYDLKGEFIN (69 aa)).

It belongs to the methylthiotransferase family. RimO subfamily. [4Fe-4S] cluster is required as a cofactor.

It is found in the cytoplasm. It catalyses the reaction L-aspartate(89)-[ribosomal protein uS12]-hydrogen + (sulfur carrier)-SH + AH2 + 2 S-adenosyl-L-methionine = 3-methylsulfanyl-L-aspartate(89)-[ribosomal protein uS12]-hydrogen + (sulfur carrier)-H + 5'-deoxyadenosine + L-methionine + A + S-adenosyl-L-homocysteine + 2 H(+). In terms of biological role, catalyzes the methylthiolation of an aspartic acid residue of ribosomal protein uS12. The chain is Ribosomal protein uS12 methylthiotransferase RimO from Carboxydothermus hydrogenoformans (strain ATCC BAA-161 / DSM 6008 / Z-2901).